A 747-amino-acid polypeptide reads, in one-letter code: ATPase family gene 2 protein homolog B (747 aa).

Position 1 is an N-acetylmethionine (Met-1). ATP contacts are provided by residues Gly-234–Thr-241 and Gly-500–Thr-507.

Belongs to the AAA ATPase family. AFG2 subfamily. In terms of assembly, part of the 55LCC heterohexameric ATPase complex composed at least of AIRIM, AFG2A, AFG2B and CINP. Associates with pre-60S ribosomal particles. In terms of tissue distribution, expressed in neurons; also expressed at lower level in astrocytes, oligodendrocytes and microglia.

It is found in the cytoplasm. Its subcellular location is the cytoskeleton. It localises to the spindle. The protein resides in the nucleus. The enzyme catalyses ATP + H2O = ADP + phosphate + H(+). With respect to regulation, in the context of 55LCC heterohexameric ATPase complex, the ATPase activity is stimulated by DNA binding and inhibited in presence of RNA. In terms of biological role, ATP-dependent chaperone part of the 55LCC heterohexameric ATPase complex which is chromatin-associated and promotes replisome proteostasis to maintain replication fork progression and genome stability. Required for replication fork progression, sister chromatid cohesion, and chromosome stability. The ATPase activity is specifically enhanced by replication fork DNA and is coupled to cysteine protease-dependent cleavage of replisome substrates in response to replication fork damage. Uses ATPase activity to process replisome substrates in S-phase, facilitating their proteolytic turnover from chromatin to ensure DNA replication and mitotic fidelity. Plays an essential role in the cytoplasmic maturation steps of pre-60S ribosomal particles by promoting the release of shuttling protein RSL24D1/RLP24 from the pre-ribosomal particles. This chain is ATPase family gene 2 protein homolog B (Afg2b), found in Rattus norvegicus (Rat).